A 330-amino-acid polypeptide reads, in one-letter code: Mas-related G-protein coupled receptor member X2 (330 aa).

Over 1–33 the chain is Extracellular; the sequence is MDPTTPAWGNESTTMNGNDQALPLLCGKETLIP. The helical transmembrane segment at 34-54 threads the bilayer; sequence VFLILFIALVGLVGNGFVLWL. Topologically, residues 55–63 are cytoplasmic; the sequence is LGFCMRRNA. A helical transmembrane segment spans residues 64–84; sequence FSVYVLSLAGADFLFLCFQLI. Over 85 to 96 the chain is Extracellular; it reads NCLVYLSNFFCS. A helical membrane pass occupies residues 97 to 117; sequence ISIDFPSFFTTVMTCAYLAGL. Residues 118–144 are Cytoplasmic-facing; sequence SMLSTISTERCLSVLWPIWYRCRRPRH. The chain crosses the membrane as a helical span at residues 145 to 165; the sequence is LSAVVCVLLWALSLLLSILEG. Residues 166-184 lie on the Extracellular side of the membrane; the sequence is KFCGFFFSDGDSGWCQTFD. The helical transmembrane segment at 185-205 threads the bilayer; the sequence is FITAAWLIFLFMVLCGSSLAL. Over 206-228 the chain is Cytoplasmic; that stretch reads LVRILCGSRGLPLTRLYLTILLT. The helical transmembrane segment at 229-249 threads the bilayer; that stretch reads VLVFLLCGLPFGIQWFLILWI. Residues 250–264 are Extracellular-facing; that stretch reads WENSDVLFCHIHPVS. Residues 265 to 285 traverse the membrane as a helical segment; it reads VVLSSLNSSANPIIYFFVGTF. Residues 286 to 330 lie on the Cytoplasmic side of the membrane; that stretch reads RKQWRLQQPILKLALQRALQDTAEVDHSEGCFRQGTPEMSRSSLV.

It belongs to the G-protein coupled receptor 1 family. Mas subfamily.

It is found in the cell membrane. Functionally, mast cell-specific receptor for basic secretagogues, i.e. cationic amphiphilic drugs, as well as endo- or exogenous peptides, consisting of a basic head group and a hydrophobic core. Recognizes and binds small molecules containing a cyclized tetrahydroisoquinoline (THIQ), such as non-steroidal neuromuscular blocking drugs (NMBDs), including tubocurarine and atracurium. In response to these compounds, mediates pseudo-allergic reactions characterized by histamine release, inflammation and airway contraction. This chain is Mas-related G-protein coupled receptor member X2 (MRGPRX2), found in Pongo pygmaeus (Bornean orangutan).